We begin with the raw amino-acid sequence, 584 residues long: Pentalenolactone D synthase (584 aa).

FAD-binding positions include 55–56 (IG), 77–78 (DG), 85–86 (TW), 97–98 (DV), Tyr103, Val147, and Met486.

This sequence belongs to the FAD-binding monooxygenase family. FAD serves as cofactor.

It catalyses the reaction 1-deoxy-11-oxopentalenate + NADPH + O2 + H(+) = pentalenolactone D + NADP(+) + H2O. It participates in antibiotic biosynthesis; pentalenolactone biosynthesis. Functionally, catalyzes the flavin-dependent Baeyer-Villiger oxidation of 1-deoxy-11-oxopentalenic acid to pentalenolactone D in the biosynthesis of pentalenolactone antibiotic. The chain is Pentalenolactone D synthase (penE) from Streptomyces exfoliatus (Streptomyces hydrogenans).